The chain runs to 494 residues: NAD(P)H-quinone oxidoreductase subunit 2 B, chloroplastic (494 aa).

13 helical membrane-spanning segments follow: residues leucine 6–leucine 26, threonine 39–phenylalanine 59, isoleucine 81–isoleucine 101, methionine 106–cysteine 126, leucine 131–tyrosine 151, leucine 166–leucine 186, isoleucine 211–phenylalanine 231, tryptophan 277–isoleucine 297, methionine 305–aspartate 325, tyrosine 336–leucine 356, alanine 377–phenylalanine 397, leucine 413–isoleucine 433, and methionine 468–isoleucine 488.

This sequence belongs to the complex I subunit 2 family. As to quaternary structure, NDH is composed of at least 16 different subunits, 5 of which are encoded in the nucleus.

It is found in the plastid. It localises to the chloroplast thylakoid membrane. It catalyses the reaction a plastoquinone + NADH + (n+1) H(+)(in) = a plastoquinol + NAD(+) + n H(+)(out). The catalysed reaction is a plastoquinone + NADPH + (n+1) H(+)(in) = a plastoquinol + NADP(+) + n H(+)(out). Functionally, NDH shuttles electrons from NAD(P)H:plastoquinone, via FMN and iron-sulfur (Fe-S) centers, to quinones in the photosynthetic chain and possibly in a chloroplast respiratory chain. The immediate electron acceptor for the enzyme in this species is believed to be plastoquinone. Couples the redox reaction to proton translocation, and thus conserves the redox energy in a proton gradient. This chain is NAD(P)H-quinone oxidoreductase subunit 2 B, chloroplastic, found in Cycas taitungensis (Prince sago).